The primary structure comprises 83 residues: Salivary thrombin inhibitor anophelin (83 aa).

The N-terminal stretch at 1-22 (MANKLVLISLLCVVLVAKITQA) is a signal peptide. Positions 25–51 (QYAPGDEPSYDEDTDDSDKLVENDTSI) are disordered. N-linked (GlcNAc...) asparagine glycosylation occurs at Asn47. The interval 54 to 83 (EDYAAIEASLSETFNTAADPGRRLGEGSKP) is sufficient for host thrombin inhibition. A blocks exosite I of host thrombin region spans residues 56 to 62 (YAAIEAS). The tract at residues 64-83 (SETFNTAADPGRRLGEGSKP) is disordered. The segment at 72–75 (DPGR) is blocks active site cleft of host thrombin in a reverse direction compared to substrates. Over residues 73–83 (PGRRLGEGSKP) the composition is skewed to basic and acidic residues.

It belongs to the anophelin family. In terms of assembly, interacts with human F2 (thrombin); the interaction results in thrombin inhibition. Salivary gland (at protein level).

The protein resides in the secreted. Increasing concentration of NaCl decreases affinity for thrombin. Functionally, salivary protein with anticoagulant activity that inhibits host thrombin (F2); binds to the proteinase in a reverse orientation (opposite to substrates). Inhibits thrombin-induced platelet aggregation. The protein is Salivary thrombin inhibitor anophelin of Anopheles albimanus (New world malaria mosquito).